Reading from the N-terminus, the 217-residue chain is GTP cyclohydrolase 1 (217 aa).

Zn(2+) is bound by residues Cys109, His112, and Cys180.

This sequence belongs to the GTP cyclohydrolase I family. Toroid-shaped homodecamer, composed of two pentamers of five dimers.

It catalyses the reaction GTP + H2O = 7,8-dihydroneopterin 3'-triphosphate + formate + H(+). It participates in cofactor biosynthesis; 7,8-dihydroneopterin triphosphate biosynthesis; 7,8-dihydroneopterin triphosphate from GTP: step 1/1. The protein is GTP cyclohydrolase 1 of Vibrio parahaemolyticus serotype O3:K6 (strain RIMD 2210633).